Consider the following 512-residue polypeptide: Maturase K (512 aa).

Belongs to the intron maturase 2 family. MatK subfamily.

The protein resides in the plastid. It is found in the chloroplast. Usually encoded in the trnK tRNA gene intron. Probably assists in splicing its own and other chloroplast group II introns. This chain is Maturase K, found in Lemna minuta (Least duckweed).